The primary structure comprises 215 residues: Peroxiredoxin-5, mitochondrial (215 aa).

Residues 1–53 (MGLAGVCVLRRSAGYILGGAARQSVAATAAARRRSEGGWASGGVRSFSRAAAA) constitute a mitochondrion transit peptide. One can recognise a Thioredoxin domain in the interval 57–215 (IKVGDAIPAV…SLAPSIISQL (159 aa)). Lys-76 carries the post-translational modification N6-acetyllysine. Position 84 is an N6-acetyllysine; alternate (Lys-84). N6-succinyllysine; alternate is present on Lys-84. The Cysteine sulfenic acid (-SOH) intermediate role is filled by Cys-101. Residue Cys-101 is the site of S-palmitoyl cysteine attachment. Cys-101 and Cys-205 are oxidised to a cystine. Position 117 is an N6-succinyllysine (Lys-117). Residues Ser-172 and Ser-183 each carry the phosphoserine modification. The short motif at 213–215 (SQL) is the Microbody targeting signal element.

The protein belongs to the peroxiredoxin family. Prx5 subfamily. In terms of assembly, monomer. S-palmitoylated. Palmitoylation occurs on the active site, inhibiting its reactivity; therefore PRDX5 palmitoylation status determines its antioxidant capacity. Post-translationally, S-palmitoylated. Depalmitoylated by ABHD10.

Its subcellular location is the mitochondrion. The protein resides in the cytoplasm. The protein localises to the peroxisome matrix. It catalyses the reaction a hydroperoxide + [thioredoxin]-dithiol = an alcohol + [thioredoxin]-disulfide + H2O. In terms of biological role, thiol-specific peroxidase that catalyzes the reduction of hydrogen peroxide and organic hydroperoxides to water and alcohols, respectively. Plays a role in cell protection against oxidative stress by detoxifying peroxides and as sensor of hydrogen peroxide-mediated signaling events. This is Peroxiredoxin-5, mitochondrial (PRDX5) from Chlorocebus aethiops (Green monkey).